The sequence spans 71 residues: Serine palmitoyltransferase small subunit A (71 aa).

Residues 1–12 (MAGMALARAWKQ) are Cytoplasmic-facing. Residues 13–29 (MSWFYYQYLLVTALYML) form a helical membrane-spanning segment. At 30 to 34 (EPWER) the chain is on the lumenal side. Residues 35 to 57 (TVFNSMLVSIVGMALYTGYVFMP) form a helical membrane-spanning segment. At 58-71 (QHIMAILHYFEIVQ) the chain is on the cytoplasmic side.

The protein belongs to the SPTSS family. SPTSSA subfamily. As to quaternary structure, component of the serine palmitoyltransferase (SPT) complex, which is composed of SPTLC1, SPTLC2 or SPTLC3 and SPTSSA or SPTSSB. The heterodimer consisting of SPTLC1 and SPTLC2/SPTLC3 forms the catalytic core of the enzyme, while SPTSSA or SPTSSB subunits determine substrate specificity. SPT also interacts with ORMDL proteins, especially ORMDL3, which negatively regulate SPT activity in the presence of ceramides. Interacts with MBOAT7; the interaction plays a role in MBOAT7 localization to mitochondria-associated membranes.

The protein resides in the endoplasmic reticulum membrane. It functions in the pathway lipid metabolism; sphingolipid metabolism. Functionally, component of the serine palmitoyltransferase multisubunit enzyme (SPT) that catalyzes the initial and rate-limiting step in sphingolipid biosynthesis by condensing L-serine and activated acyl-CoA (most commonly palmitoyl-CoA) to form long-chain bases. The SPT complex is composed of SPTLC1, SPTLC2 or SPTLC3 and SPTSSA or SPTSSB. Within this complex, the heterodimer consisting of SPTLC1 and SPTLC2/SPTLC3 forms the catalytic core. Within the SPT complex, SPTSSA stimulates the catalytic activity and plays a role in substrate specificity, which depends upon the overall complex composition. The SPTLC1-SPTLC2-SPTSSA complex shows a strong preference for C16-CoA substrate, while the SPTLC1-SPTLC3-SPTSSA isozyme uses both C14-CoA and C16-CoA as substrates, with a slight preference for C14-CoA. Independently of its action as a SPT component, may be involved in MBOAT7 localization to mitochondria-associated membranes, a membrane bridge between the endoplasmic reticulum and mitochondria, may hence affect MBOAT7-catalyzed incorporation of arachidonic acid into phosphatidylinositol. In Homo sapiens (Human), this protein is Serine palmitoyltransferase small subunit A.